Reading from the N-terminus, the 218-residue chain is Probable GTP-binding protein EngB (218 aa).

The region spanning 31–205 (VGVEIAFAGR…LGILNEWCHP (175 aa)) is the EngB-type G domain. Residues 39 to 46 (GRSNAGKS), 66 to 70 (GRTQL), 84 to 87 (DLPG), 151 to 154 (TKCD), and 184 to 186 (FSS) contribute to the GTP site. Residues Ser-46 and Thr-68 each coordinate Mg(2+).

Belongs to the TRAFAC class TrmE-Era-EngA-EngB-Septin-like GTPase superfamily. EngB GTPase family. Mg(2+) is required as a cofactor.

In terms of biological role, necessary for normal cell division and for the maintenance of normal septation. The protein is Probable GTP-binding protein EngB of Shewanella loihica (strain ATCC BAA-1088 / PV-4).